Consider the following 476-residue polypeptide: Cytochrome P450 6B5 (476 aa).

Cysteine 443 contributes to the heme binding site.

The protein belongs to the cytochrome P450 family. It depends on heme as a cofactor.

The protein resides in the endoplasmic reticulum membrane. The protein localises to the microsome membrane. It catalyses the reaction an organic molecule + reduced [NADPH--hemoprotein reductase] + O2 = an alcohol + oxidized [NADPH--hemoprotein reductase] + H2O + H(+). Functionally, enables the insect to feed on furanocoumarin-producing plants and evolved as an adaptation for detoxification of xanthotoxin and other furanocoumarins. In Papilio glaucus (Eastern tiger swallowtail butterfly), this protein is Cytochrome P450 6B5 (CYP6B5).